A 367-amino-acid chain; its full sequence is Eukaryotic translation initiation factor 3 subunit H (367 aa).

The MPN domain occupies 14 to 166 (VQVEALVVMK…LRAFRLSPTF (153 aa)).

Belongs to the eIF-3 subunit H family. As to quaternary structure, component of the eukaryotic translation initiation factor 3 (eIF-3) complex.

The protein resides in the cytoplasm. Functionally, component of the eukaryotic translation initiation factor 3 (eIF-3) complex, which is involved in protein synthesis of a specialized repertoire of mRNAs and, together with other initiation factors, stimulates binding of mRNA and methionyl-tRNAi to the 40S ribosome. The eIF-3 complex specifically targets and initiates translation of a subset of mRNAs involved in cell proliferation. The sequence is that of Eukaryotic translation initiation factor 3 subunit H from Botryotinia fuckeliana (strain B05.10) (Noble rot fungus).